The following is a 1484-amino-acid chain: Chromosome partition protein MukB (1484 aa).

34–41 provides a ligand contact to ATP; sequence GGNGAGKS. Coiled coils occupy residues 338-415, 496-604, 781-805, 835-868, 903-1115, and 1206-1265; these read NLVQ…RAIQ, QTAR…ALAW, AARE…ATLS, EAEM…HYDQ, HDAQ…SAKA, and DDPV…LQAV. The segment at 666–783 is flexible hinge; that stretch reads PGGTDDARLT…AVPLFGRAAR (118 aa).

The protein belongs to the SMC family. MukB subfamily. Homodimerization via its hinge domain. Binds to DNA via its C-terminal region. Interacts, and probably forms a ternary complex, with MukE and MukF via its C-terminal region. The complex formation is stimulated by calcium or magnesium. Interacts with tubulin-related protein FtsZ.

The protein resides in the cytoplasm. Its subcellular location is the nucleoid. Its function is as follows. Plays a central role in chromosome condensation, segregation and cell cycle progression. Functions as a homodimer, which is essential for chromosome partition. Involved in negative DNA supercoiling in vivo, and by this means organize and compact chromosomes. May achieve or facilitate chromosome segregation by condensation DNA from both sides of a centrally located replisome during cell division. This chain is Chromosome partition protein MukB, found in Sodalis glossinidius (strain morsitans).